A 340-amino-acid chain; its full sequence is Probable HTH-type transcriptional regulator EndR (340 aa).

Residues 1–58 (MVTTMKEVAERAGVSKSTVSQFLQKRYNYMSENTKKKIEQAIEDLSYIPNEVARSLKQ) form the HTH lacI-type domain. The H-T-H motif DNA-binding region spans 5 to 24 (MKEVAERAGVSKSTVSQFLQ).

In terms of biological role, putative repressor of the endoglucanase operon. This Paenibacillus polymyxa (Bacillus polymyxa) protein is Probable HTH-type transcriptional regulator EndR (endR).